The primary structure comprises 292 residues: Insulin-like growth factor-binding protein 3 (292 aa).

The N-terminal stretch at 1–27 (MHPARPALWAAALTALTLLRGPPVARA) is a signal peptide. The 84-residue stretch at 36–119 (PVVRCEPCDA…LNGRGFCANA (84 aa)) folds into the IGFBP N-terminal domain. 6 disulfide bridges follow: cysteine 40-cysteine 69, cysteine 43-cysteine 71, cysteine 51-cysteine 72, cysteine 60-cysteine 75, cysteine 83-cysteine 96, and cysteine 90-cysteine 116. 2 N-linked (GlcNAc...) asparagine glycosylation sites follow: asparagine 118 and asparagine 137. 2 disordered regions span residues 128 to 152 (YLPS…SVES) and 178 to 212 (KGHA…TEYG). Phosphoserine is present on serine 149. Residues 178-191 (KGHARDSQRYKVDY) show a composition bias toward basic and acidic residues. Over residues 192-203 (ESQSTDTQNFSS) the composition is skewed to polar residues. N-linked (GlcNAc...) asparagine glycosylation occurs at asparagine 200. A Phosphoserine modification is found at serine 202. A Thyroglobulin type-1 domain is found at 211 to 286 (YGPCRREMED…DTKGKDDVHC (76 aa)). 3 disulfides stabilise this stretch: cysteine 214–cysteine 241, cysteine 252–cysteine 263, and cysteine 265–cysteine 286.

As to quaternary structure, interacts with XLKD1. Binds IGF2 more than IGF1. Forms a ternary complex of about 140 to 150 kDa with IGF1 or IGF2 and a 85 kDa glycoprotein (ALS). Interacts with TMEM219. Post-translationally, phosphorylated by FAM20C in the extracellular medium.

Its subcellular location is the secreted. Functionally, IGF-binding proteins prolong the half-life of the IGFs and have been shown to either inhibit or stimulate the growth promoting effects of the IGFs on cell culture. They alter the interaction of IGFs with their cell surface receptors. Also exhibits IGF-independent antiproliferative and apoptotic effects mediated by its receptor TMEM219/IGFBP-3R. Promotes testicular germ cell apoptosis. In Mus musculus (Mouse), this protein is Insulin-like growth factor-binding protein 3 (Igfbp3).